A 212-amino-acid chain; its full sequence is Nucleoside diphosphate kinase homolog 5 (212 aa).

The segment at 13 to 145 (EKTLAIIKPD…EREIRFMFPE (133 aa)) is NDK.

Belongs to the NDK family. In terms of assembly, component of the axonemal radial spoke complex 1 (RS1), at least composed of spoke head proteins RSPH1, RSPH3, RSPH9 and the cilia-specific component RSPH4A or sperm-specific component RSPH6A, spoke stalk proteins RSPH14, DNAJB13, DYDC1, ROPN1L and NME5, and the anchor protein IQUB. Interacts with IQUB. As to expression, specifically expressed in testis germinal cells.

The protein resides in the cell projection. The protein localises to the cilium. Its subcellular location is the cytoplasm. It localises to the cytoskeleton. It is found in the flagellum axoneme. In terms of biological role, functions as part of axonemal radial spoke complexes that play an important part in the motility of sperm and cilia. Does not seem to have nucleoside diphosphate kinase (NDPK) activity. Confers protection from cell death by BAX and alters the cellular levels of several antioxidant enzymes including GPX5. May play a role in spermiogenesis by increasing the ability of late-stage spermatids to eliminate reactive oxygen species. Exhibits a 3'-5' exonuclease activity with a preference for single-stranded DNA, suggesting roles in DNA proofreading and repair. The chain is Nucleoside diphosphate kinase homolog 5 from Homo sapiens (Human).